A 142-amino-acid polypeptide reads, in one-letter code: MRGTSCVGGGAESPGGAGLSEGPRGRWLRLAPVCAYFLCVSLAAVLLAVYYGLIWVPTRSPAAPAGPQPSAPSPPCAARPGVPPVPAPAAASLSCLLGVPGGPRPQLQLPLSRRRRYSDPDRRPSRQTPRETPEAAEGRRPG.

Residues 1 to 19 (MRGTSCVGGGAESPGGAGL) are compositionally biased toward gly residues. Residues 1–22 (MRGTSCVGGGAESPGGAGLSEG) form a disordered region. Residues 36–56 (YFLCVSLAAVLLAVYYGLIWV) form a helical membrane-spanning segment. 2 disordered regions span residues 61 to 83 (PAAP…PGVP) and 99 to 142 (VPGG…RRPG). Positions 64-83 (PAGPQPSAPSPPCAARPGVP) are enriched in pro residues. A compositionally biased stretch (low complexity) spans 99 to 111 (VPGGPRPQLQLPL). Basic and acidic residues predominate over residues 117 to 142 (YSDPDRRPSRQTPRETPEAAEGRRPG).

It localises to the membrane. This chain is Putative transmembrane protein INAFM1, found in Homo sapiens (Human).